A 361-amino-acid polypeptide reads, in one-letter code: Phosphoserine aminotransferase (361 aa).

Arginine 42 provides a ligand contact to L-glutamate. Residues 76–77, tryptophan 102, threonine 153, aspartate 173, and glutamine 196 contribute to the pyridoxal 5'-phosphate site; that span reads AR. N6-(pyridoxal phosphate)lysine is present on lysine 197. 238-239 lines the pyridoxal 5'-phosphate pocket; the sequence is NT.

This sequence belongs to the class-V pyridoxal-phosphate-dependent aminotransferase family. SerC subfamily. As to quaternary structure, homodimer. Pyridoxal 5'-phosphate is required as a cofactor.

Its subcellular location is the cytoplasm. The catalysed reaction is O-phospho-L-serine + 2-oxoglutarate = 3-phosphooxypyruvate + L-glutamate. It catalyses the reaction 4-(phosphooxy)-L-threonine + 2-oxoglutarate = (R)-3-hydroxy-2-oxo-4-phosphooxybutanoate + L-glutamate. The protein operates within amino-acid biosynthesis; L-serine biosynthesis; L-serine from 3-phospho-D-glycerate: step 2/3. It participates in cofactor biosynthesis; pyridoxine 5'-phosphate biosynthesis; pyridoxine 5'-phosphate from D-erythrose 4-phosphate: step 3/5. Catalyzes the reversible conversion of 3-phosphohydroxypyruvate to phosphoserine and of 3-hydroxy-2-oxo-4-phosphonooxybutanoate to phosphohydroxythreonine. The chain is Phosphoserine aminotransferase from Yersinia pestis bv. Antiqua (strain Angola).